The sequence spans 173 residues: Shikimate kinase 1 (173 aa).

14-19 serves as a coordination point for ATP; that stretch reads GAGKST. Ser18 serves as a coordination point for Mg(2+). Asp36, Arg60, and Gly82 together coordinate substrate. Arg120 lines the ATP pocket. Arg140 lines the substrate pocket. Gln157 is an ATP binding site.

The protein belongs to the shikimate kinase family. In terms of assembly, monomer. Requires Mg(2+) as cofactor.

The protein resides in the cytoplasm. The catalysed reaction is shikimate + ATP = 3-phosphoshikimate + ADP + H(+). Its pathway is metabolic intermediate biosynthesis; chorismate biosynthesis; chorismate from D-erythrose 4-phosphate and phosphoenolpyruvate: step 5/7. Its function is as follows. Catalyzes the specific phosphorylation of the 3-hydroxyl group of shikimic acid using ATP as a cosubstrate. The chain is Shikimate kinase 1 from Citrobacter koseri (strain ATCC BAA-895 / CDC 4225-83 / SGSC4696).